Consider the following 175-residue polypeptide: B9 domain-containing protein 2 (175 aa).

In terms of domain architecture, C2 B9-type spans 2-118 (AEVHVIGQII…DCPTWRPLGS (117 aa)).

The protein belongs to the B9D family. In terms of assembly, part of the tectonic-like complex (also named B9 complex). Interacts with TUBG1.

The protein localises to the cytoplasm. The protein resides in the cytoskeleton. It localises to the cilium basal body. Its subcellular location is the cilium axoneme. It is found in the nucleus. Component of the tectonic-like complex, a complex localized at the transition zone of primary cilia and acting as a barrier that prevents diffusion of transmembrane proteins between the cilia and plasma membranes. The sequence is that of B9 domain-containing protein 2 (B9d2) from Rattus norvegicus (Rat).